The following is a 498-amino-acid chain: ATP synthase subunit beta, chloroplastic (498 aa).

Residue 172 to 179 (GGAGVGKT) coordinates ATP.

The protein belongs to the ATPase alpha/beta chains family. F-type ATPases have 2 components, CF(1) - the catalytic core - and CF(0) - the membrane proton channel. CF(1) has five subunits: alpha(3), beta(3), gamma(1), delta(1), epsilon(1). CF(0) has four main subunits: a(1), b(1), b'(1) and c(9-12).

The protein resides in the plastid. It localises to the chloroplast thylakoid membrane. The catalysed reaction is ATP + H2O + 4 H(+)(in) = ADP + phosphate + 5 H(+)(out). Produces ATP from ADP in the presence of a proton gradient across the membrane. The catalytic sites are hosted primarily by the beta subunits. This is ATP synthase subunit beta, chloroplastic from Salacca zalacca (Snake palm).